The sequence spans 151 residues: Putative pre-16S rRNA nuclease (151 aa).

The protein belongs to the YqgF nuclease family.

It is found in the cytoplasm. Functionally, could be a nuclease involved in processing of the 5'-end of pre-16S rRNA. This Methylococcus capsulatus (strain ATCC 33009 / NCIMB 11132 / Bath) protein is Putative pre-16S rRNA nuclease.